A 1116-amino-acid chain; its full sequence is Anillin (1116 aa).

2 stretches are compositionally biased toward basic and acidic residues: residues 1–25 (MDPFTEKLLERTRARRENLQKKMAD) and 85–94 (KQPKTPELPK). Disordered stretches follow at residues 1–188 (MDPF…PVGR), 205–257 (DLSH…PKDT), 304–363 (KPNE…KVAT), and 443–522 (NVWT…PRLV). A compositionally biased stretch (polar residues) spans 101–119 (ASHQQLRATNQTPQVSLLS). A compositionally biased stretch (basic and acidic residues) spans 120–133 (SDKELTASDVKDAS). The interactions with myh9 and myh10 stretch occupies residues 142-254 (LADQRRYWDN…QDTTSCSQRP (113 aa)). Residues 226 to 242 (SKESTTSSASASMNSHS) show a composition bias toward low complexity. Residues 255-418 (KDTTVNKAVC…LKQNDISSTA (164 aa)) form an interaction with F-actin region. Composition is skewed to polar residues over residues 304 to 326 (KPNENVLPASSSLKPVSANSSPQ) and 336 to 356 (YSYQSASARNELNNNTPVQTQ). Positions 416–443 (STASLAQQQKKEREKELAALRGRYDRRN) form a coiled coil. The segment covering 453 to 472 (QGTFPETSSNLPTSDVASCS) has biased composition (polar residues). The PH domain occupies 975–1099 (SVEDKGFLTM…WMQKLNQFLV (125 aa)).

As to quaternary structure, interacts with and bundles F-actin. Interacts with the non-muscle myosin II heavy chains myh9 and myh10, and these interactions may be enhanced by the phosphorylation of myosin II regulatory light chain by mylk.

The protein resides in the nucleus. It is found in the cytoplasm. Its subcellular location is the cytoskeleton. It localises to the cell cortex. The protein localises to the cell projection. The protein resides in the bleb. Required for cytokinesis. Essential for the structural integrity of the cleavage furrow and for completion of cleavage furrow ingression. Plays a role in bleb assembly during metaphase and anaphase of mitosis. May play a significant role in podocyte cell migration. The sequence is that of Anillin (anln) from Xenopus laevis (African clawed frog).